The chain runs to 289 residues: Ribosomal protein L11 methyltransferase (289 aa).

S-adenosyl-L-methionine is bound by residues threonine 142, glycine 163, aspartate 185, and asparagine 226.

This sequence belongs to the methyltransferase superfamily. PrmA family.

The protein localises to the cytoplasm. It catalyses the reaction L-lysyl-[protein] + 3 S-adenosyl-L-methionine = N(6),N(6),N(6)-trimethyl-L-lysyl-[protein] + 3 S-adenosyl-L-homocysteine + 3 H(+). In terms of biological role, methylates ribosomal protein L11. The sequence is that of Ribosomal protein L11 methyltransferase from Legionella pneumophila subsp. pneumophila (strain Philadelphia 1 / ATCC 33152 / DSM 7513).